The sequence spans 373 residues: Alanine racemase (373 aa).

K35 acts as the Proton acceptor; specific for D-alanine in catalysis. Residue K35 is modified to N6-(pyridoxal phosphate)lysine. Position 130 (R130) interacts with substrate. Y253 (proton acceptor; specific for L-alanine) is an active-site residue. Position 305 (M305) interacts with substrate.

The protein belongs to the alanine racemase family. Pyridoxal 5'-phosphate serves as cofactor.

The enzyme catalyses L-alanine = D-alanine. The protein operates within amino-acid biosynthesis; D-alanine biosynthesis; D-alanine from L-alanine: step 1/1. Functionally, catalyzes the interconversion of L-alanine and D-alanine. May also act on other amino acids. The protein is Alanine racemase (alr) of Cupriavidus necator (strain ATCC 17699 / DSM 428 / KCTC 22496 / NCIMB 10442 / H16 / Stanier 337) (Ralstonia eutropha).